Consider the following 60-residue polypeptide: Small ribosomal subunit protein bS21 (60 aa).

A disordered region spans residues 39 to 60 (ETPQEKRKRKAVARRRQRTRRR). The span at 44–60 (KRKRKAVARRRQRTRRR) shows a compositional bias: basic residues.

This sequence belongs to the bacterial ribosomal protein bS21 family.

This is Small ribosomal subunit protein bS21 from Microcystis aeruginosa (strain NIES-843 / IAM M-2473).